A 328-amino-acid chain; its full sequence is Methionyl-tRNA formyltransferase (328 aa).

A (6S)-5,6,7,8-tetrahydrofolate-binding site is contributed by 121-124; it reads SLLP.

The protein belongs to the Fmt family.

The enzyme catalyses L-methionyl-tRNA(fMet) + (6R)-10-formyltetrahydrofolate = N-formyl-L-methionyl-tRNA(fMet) + (6S)-5,6,7,8-tetrahydrofolate + H(+). Attaches a formyl group to the free amino group of methionyl-tRNA(fMet). The formyl group appears to play a dual role in the initiator identity of N-formylmethionyl-tRNA by promoting its recognition by IF2 and preventing the misappropriation of this tRNA by the elongation apparatus. The sequence is that of Methionyl-tRNA formyltransferase from Paraburkholderia phytofirmans (strain DSM 17436 / LMG 22146 / PsJN) (Burkholderia phytofirmans).